The chain runs to 125 residues: Glycine cleavage system H protein (125 aa).

Residues 22–104 enclose the Lipoyl-binding domain; that stretch reads SYVIGITDFA…YDTGWILKLE (83 aa). K63 is subject to N6-lipoyllysine.

It belongs to the GcvH family. The glycine cleavage system is composed of four proteins: P, T, L and H. (R)-lipoate is required as a cofactor.

In terms of biological role, the glycine cleavage system catalyzes the degradation of glycine. The H protein shuttles the methylamine group of glycine from the P protein to the T protein. Its function is as follows. Is also involved in protein lipoylation via its role as an octanoyl/lipoyl carrier protein intermediate. The protein is Glycine cleavage system H protein of Listeria monocytogenes serotype 4a (strain HCC23).